The following is a 99-amino-acid chain: Large ribosomal subunit protein uL23cz/uL23cy (99 aa).

Residues 1 to 37 (MGGVENPVSTDKAIRLPERKQYSSNAEPNPSKTEVKR) form a disordered region. Basic and acidic residues predominate over residues 12 to 21 (KAIRLPERKQ). Polar residues predominate over residues 22-32 (YSSNAEPNPSK).

The protein belongs to the universal ribosomal protein uL23 family. Part of the 50S ribosomal subunit.

It localises to the plastid. The protein localises to the chloroplast. Its function is as follows. Binds to 23S rRNA. The chain is Large ribosomal subunit protein uL23cz/uL23cy (rpl23-A) from Selaginella uncinata (Blue spike-moss).